A 651-amino-acid chain; its full sequence is MRCLTKTRSFHYVIIFYSFFFLPFLSSSSDDQRTTVSGLFCGGRSKSSADPNYIPTFVEDMHSLSLKLTTRRFATESLNSTTSIYALIQCHDDLSPSDCQLCYAIARTRIPRCLPSSSARIFLDGCFLRYETYEFYDESVSDASDSFSCSNDTVLDPRFGFQVSETAARVAVRKGGFGVAGENGVHALAQCWESLGKEDCRVCLEKAVKEVKRCVSRREGRAMNTGCYLRYSDHKFYNGDGHHKFHVLFNKGVIVAIVLTTSAFVMLILLATYVIMTKVSKTKQEKRNLGLVSRKFNNSKTKFKYETLEKATDYFSHKKMLGQGGNGTVFLGILPNGKNVAVKRLVFNTRDWVEEFFNEVNLISGIQHKNLVKLLGCSIEGPESLLVYEYVPNKSLDQFLFDESQSKVLNWSQRLNIILGTAEGLAYLHGGSPVRIIHRDIKTSNVLLDDQLNPKIADFGLARCFGLDKTHLSTGIAGTLGYMAPEYVVRGQLTEKADVYSFGVLVLEIACGTRINAFVPETGHLLQRVWNLYTLNRLVEALDPCLKDEFLQVQGSEAEACKVLRVGLLCTQASPSLRPSMEEVIRMLTERDYPIPSPTSPPFLRVSSLTTDLEGSSTISHSTNSTTTFNTMVKTDQASYTSSESSTTRTI.

The signal sequence occupies residues 1–28; it reads MRCLTKTRSFHYVIIFYSFFFLPFLSSS. At 29-251 the chain is on the extracellular side; the sequence is SDDQRTTVSG…HHKFHVLFNK (223 aa). Gnk2-homologous domains follow at residues 35-135 and 137-236; these read TVSG…TYEF and DESV…DHKF. Asn79 and Asn151 each carry an N-linked (GlcNAc...) asparagine glycan. The chain crosses the membrane as a helical span at residues 252–272; sequence GVIVAIVLTTSAFVMLILLAT. Over 273 to 651 the chain is Cytoplasmic; it reads YVIMTKVSKT…SSESSTTRTI (379 aa). One can recognise a Protein kinase domain in the interval 315–604; sequence FSHKKMLGQG…IPSPTSPPFL (290 aa). ATP is bound by residues 321-329 and Lys343; that span reads LGQGGNGTV. Tyr388 carries the phosphotyrosine modification. The active-site Proton acceptor is the Asp440. Phosphoserine occurs at positions 444 and 473. Phosphothreonine occurs at positions 474 and 479. Tyr487 carries the post-translational modification Phosphotyrosine.

The protein belongs to the protein kinase superfamily. Ser/Thr protein kinase family. CRK subfamily.

The protein localises to the membrane. It carries out the reaction L-seryl-[protein] + ATP = O-phospho-L-seryl-[protein] + ADP + H(+). The catalysed reaction is L-threonyl-[protein] + ATP = O-phospho-L-threonyl-[protein] + ADP + H(+). This is Cysteine-rich receptor-like protein kinase 42 (CRK42) from Arabidopsis thaliana (Mouse-ear cress).